The primary structure comprises 302 residues: L-threonate dehydrogenase (302 aa).

Residues 7–35 (FHVG…TWGA) and threonine 102 contribute to the NAD(+) site. Lysine 178 is a catalytic residue. Lysine 246 contacts NAD(+).

Belongs to the HIBADH-related family. L-threonate dehydrogenase subfamily.

The enzyme catalyses L-threonate + NAD(+) = 2-dehydro-L-erythronate + NADH + H(+). Functionally, catalyzes oxidation of L-threonate to 2-oxo-tetronate. Can use either NAD(+) or NADP(+) as cosubstrate, with a preference for NAD(+). In Escherichia coli O6:H1 (strain CFT073 / ATCC 700928 / UPEC), this protein is L-threonate dehydrogenase.